The chain runs to 396 residues: S-adenosylmethionine synthase 1 (396 aa).

Glu-12 contributes to the Mg(2+) binding site. Position 18 (His-18) interacts with ATP. Glu-46 is a K(+) binding site. L-methionine-binding residues include Glu-59 and Gln-102. ATP is bound by residues 170 to 172 (DGK), 238 to 241 (SGRF), Asp-249, 255 to 256 (RK), Ala-272, Lys-276, and Lys-280. Residue Asp-249 participates in L-methionine binding. Lys-280 contributes to the L-methionine binding site.

This sequence belongs to the AdoMet synthase family. As to quaternary structure, homotetramer. Mn(2+) serves as cofactor. Mg(2+) is required as a cofactor. Requires Co(2+) as cofactor. It depends on K(+) as a cofactor.

Its subcellular location is the cytoplasm. It carries out the reaction L-methionine + ATP + H2O = S-adenosyl-L-methionine + phosphate + diphosphate. It functions in the pathway amino-acid biosynthesis; S-adenosyl-L-methionine biosynthesis; S-adenosyl-L-methionine from L-methionine: step 1/1. In terms of biological role, catalyzes the formation of S-adenosylmethionine from methionine and ATP. The reaction comprises two steps that are both catalyzed by the same enzyme: formation of S-adenosylmethionine (AdoMet) and triphosphate, and subsequent hydrolysis of the triphosphate. The chain is S-adenosylmethionine synthase 1 (SAM1) from Oryza sativa subsp. japonica (Rice).